The sequence spans 481 residues: Cobyric acid synthase (481 aa).

Residues Ala248–Phe435 form the GATase cobBQ-type domain. The Nucleophile role is filled by Cys330. Residue His427 is part of the active site.

This sequence belongs to the CobB/CobQ family. CobQ subfamily.

It participates in cofactor biosynthesis; adenosylcobalamin biosynthesis. In terms of biological role, catalyzes amidations at positions B, D, E, and G on adenosylcobyrinic A,C-diamide. NH(2) groups are provided by glutamine, and one molecule of ATP is hydrogenolyzed for each amidation. In Cereibacter sphaeroides (strain ATCC 17023 / DSM 158 / JCM 6121 / CCUG 31486 / LMG 2827 / NBRC 12203 / NCIMB 8253 / ATH 2.4.1.) (Rhodobacter sphaeroides), this protein is Cobyric acid synthase.